A 73-amino-acid polypeptide reads, in one-letter code: UPF0154 protein PEPE_0872 (73 aa).

Residues 5 to 25 (IWIMIVIIALLVGAVGGFFFA) traverse the membrane as a helical segment.

The protein belongs to the UPF0154 family.

It is found in the cell membrane. The chain is UPF0154 protein PEPE_0872 from Pediococcus pentosaceus (strain ATCC 25745 / CCUG 21536 / LMG 10740 / 183-1w).